The primary structure comprises 1364 residues: ABC-type transporter cns4 (1364 aa).

One can recognise an ABC transporter 1 domain in the interval 42 to 290 (SRVKESRAKP…MEEMGFLYTD (249 aa)). N-linked (GlcNAc...) asparagine glycans are attached at residues Asn152 and Asn214. A run of 5 helical transmembrane segments spans residues 435–455 (LFFA…GSFA), 483–503 (IPLI…MTGL), 508–528 (EAFL…TALF), 540–560 (AAIK…GFLI), and 567–587 (PWLG…AVLS). The N-linked (GlcNAc...) asparagine glycan is linked to Asn610. The helical transmembrane segment at 650–670 (FAIVWVWWALFVILTVYFTSN) threads the bilayer. N-linked (GlcNAc...) asparagine glycosylation is found at Asn689, Asn711, and Asn739. A disordered region spans residues 697–732 (DEEVGSGPDSHDSRNRSGISPIGDKQETSTDGPSKI). Positions 737–985 (IRNTSVFTWK…TVNEYFGRNG (249 aa)) constitute an ABC transporter 2 domain. 779-786 (GSSGAGKT) contributes to the ATP binding site. The next 6 membrane-spanning stretches (helical) occupy residues 1076–1094 (LMLH…WKIG), 1105–1125 (FTIF…QPLF), 1146–1166 (AFAT…AVVY), 1185–1205 (AVFF…QAIA), 1211–1231 (AIFA…FCGV), and 1245–1265 (WLYY…FTTF).

It belongs to the ABC transporter superfamily. ABCG family. PDR (TC 3.A.1.205) subfamily.

The protein localises to the cell membrane. In terms of biological role, ABC-type transporter; part of the gene cluster that mediates the biosynthesis of cordycepin (COR) and pentostatin (PTN), two adenosine analogs with related bioactivity profiles as both mimic adenosine and can inhibit some of the processes that are adenosine dependent. Mediates the pumping of pentostatin but not of cordycepin out of fungal cells. Decreasing intracellular pentostatin releases adenosine deaminase (ADA) inhibition, allowing ADA to deaminate cordycepin into non-toxic 3'-d. This is ABC-type transporter cns4 from Cordyceps militaris (strain CM01) (Caterpillar fungus).